We begin with the raw amino-acid sequence, 424 residues long: Imidazolonepropionase (424 aa).

Fe(3+) is bound by residues H84 and H86. Zn(2+) is bound by residues H84 and H86. R93, Y156, and H189 together coordinate 4-imidazolone-5-propanoate. Y156 provides a ligand contact to N-formimidoyl-L-glutamate. H254 contributes to the Fe(3+) binding site. A Zn(2+)-binding site is contributed by H254. E257 provides a ligand contact to 4-imidazolone-5-propanoate. Position 328 (D328) interacts with Fe(3+). Position 328 (D328) interacts with Zn(2+). The N-formimidoyl-L-glutamate site is built by N330 and G332. S333 contacts 4-imidazolone-5-propanoate.

Belongs to the metallo-dependent hydrolases superfamily. HutI family. The cofactor is Zn(2+). Fe(3+) serves as cofactor.

Its subcellular location is the cytoplasm. It catalyses the reaction 4-imidazolone-5-propanoate + H2O = N-formimidoyl-L-glutamate. Its pathway is amino-acid degradation; L-histidine degradation into L-glutamate; N-formimidoyl-L-glutamate from L-histidine: step 3/3. In terms of biological role, catalyzes the hydrolytic cleavage of the carbon-nitrogen bond in imidazolone-5-propanoate to yield N-formimidoyl-L-glutamate. It is the third step in the universal histidine degradation pathway. The polypeptide is Imidazolonepropionase (Geobacillus thermodenitrificans (strain NG80-2)).